The following is a 301-amino-acid chain: 3-methyl-2-oxobutanoate hydroxymethyltransferase (301 aa).

Positions 1 to 12 are enriched in polar residues; the sequence is MAPSNLPESTTP. Positions 1 to 24 are disordered; it reads MAPSNLPESTTPAEVPAPYGTGPA. Mg(2+) is bound by residues aspartate 82 and aspartate 121. Residues 82 to 83, aspartate 121, and lysine 151 each bind 3-methyl-2-oxobutanoate; that span reads DS. Position 153 (glutamate 153) interacts with Mg(2+). Glutamate 219 (proton acceptor) is an active-site residue.

It belongs to the PanB family. Homodecamer; pentamer of dimers. Requires Mg(2+) as cofactor.

It is found in the cytoplasm. It catalyses the reaction 3-methyl-2-oxobutanoate + (6R)-5,10-methylene-5,6,7,8-tetrahydrofolate + H2O = 2-dehydropantoate + (6S)-5,6,7,8-tetrahydrofolate. The protein operates within cofactor biosynthesis; (R)-pantothenate biosynthesis; (R)-pantoate from 3-methyl-2-oxobutanoate: step 1/2. Its function is as follows. Catalyzes the reversible reaction in which hydroxymethyl group from 5,10-methylenetetrahydrofolate is transferred onto alpha-ketoisovalerate to form ketopantoate. This chain is 3-methyl-2-oxobutanoate hydroxymethyltransferase, found in Paenarthrobacter aurescens (strain TC1).